Here is a 252-residue protein sequence, read N- to C-terminus: Chitooligosaccharide deacetylase (252 aa).

His61 and His125 together coordinate Mg(2+).

The protein belongs to the YdjC deacetylase family. ChbG subfamily. Homodimer. It depends on Mg(2+) as a cofactor.

It is found in the cytoplasm. It catalyses the reaction N,N'-diacetylchitobiose + H2O = N-acetyl-beta-D-glucosaminyl-(1-&gt;4)-D-glucosamine + acetate. It carries out the reaction diacetylchitobiose-6'-phosphate + H2O = N'-monoacetylchitobiose-6'-phosphate + acetate. Its pathway is glycan degradation; chitin degradation. Its function is as follows. Involved in the degradation of chitin. ChbG is essential for growth on the acetylated chitooligosaccharides chitobiose and chitotriose but is dispensable for growth on cellobiose and chitosan dimer, the deacetylated form of chitobiose. Deacetylation of chitobiose-6-P and chitotriose-6-P is necessary for both the activation of the chb promoter by the regulatory protein ChbR and the hydrolysis of phosphorylated beta-glucosides by the phospho-beta-glucosidase ChbF. Catalyzes the removal of only one acetyl group from chitobiose-6-P to yield monoacetylchitobiose-6-P, the inducer of ChbR and the substrate of ChbF. This chain is Chitooligosaccharide deacetylase, found in Escherichia coli (strain 55989 / EAEC).